The chain runs to 289 residues: tRNA-cytidine(32) 2-sulfurtransferase (289 aa).

The short motif at 39–44 (SGGKDS) is the PP-loop motif element. [4Fe-4S] cluster contacts are provided by cysteine 114, cysteine 117, and cysteine 205.

The protein belongs to the TtcA family. In terms of assembly, homodimer. Mg(2+) serves as cofactor. It depends on [4Fe-4S] cluster as a cofactor.

It localises to the cytoplasm. The enzyme catalyses cytidine(32) in tRNA + S-sulfanyl-L-cysteinyl-[cysteine desulfurase] + AH2 + ATP = 2-thiocytidine(32) in tRNA + L-cysteinyl-[cysteine desulfurase] + A + AMP + diphosphate + H(+). It participates in tRNA modification. Its function is as follows. Catalyzes the ATP-dependent 2-thiolation of cytidine in position 32 of tRNA, to form 2-thiocytidine (s(2)C32). The sulfur atoms are provided by the cysteine/cysteine desulfurase (IscS) system. This chain is tRNA-cytidine(32) 2-sulfurtransferase, found in Deinococcus geothermalis (strain DSM 11300 / CIP 105573 / AG-3a).